A 376-amino-acid chain; its full sequence is Protein STRICTOSIDINE SYNTHASE-LIKE 2 (376 aa).

Residues 1–23 (MMKLLLVVATSVALIFSVTDLSG) form the signal peptide. Residues Asn79 and Asn244 are each glycosylated (N-linked (GlcNAc...) asparagine).

This sequence belongs to the strictosidine synthase family.

It localises to the vacuole. In Arabidopsis thaliana (Mouse-ear cress), this protein is Protein STRICTOSIDINE SYNTHASE-LIKE 2.